Consider the following 930-residue polypeptide: MSKVRLYEIAKELGKESKEVVARAKELGLDVKSHSSSVEADAGERIKSSFTKAAAPQAPAEKPVAAQPSPQKTPAKEAAPVKAEPTEAKAAAQPEAKTETAAPVKRPQSRNFKAEREARAKEEAERRKQQGNRKPQNKEQGKREDRDNRNKNRGNSNDRDRGNRPNDRRDNRGQDGRRNGQNHQGFNGQKRQQPQGPKIDFKARAAALKAEQNAEYARSSEERFKQAQEAKEVMERQNRRKEQPKAEAPAPVQPAPAPSAPAANPSPAPAAVDTRRKKQARPDKKRDDFDREEEGPRKQQKNRSSQNQVRNQRNSNWNKNKKNKKGKGNNNQAPKPVTERKFHELPTEFEYTDGMTVAEIAKRIKREPAEIVKKLFMMGVMATQNQSLDGDTIELLMVDYGIEAKKKVEVDTADIERFFVEEGYINQDALVERPPVVTIMGHVDHGKTTLLDTLRNSRVATGEAGGITQHIGAYQIEESGKKITFLDTPGHAAFTSMRARGASVTDITILVVAADDGVMPQTIEAINHSKAADVPIIVAINKIDKPGANPERVIGELAEHGVMSTAWGGDSEFVEISAKFNQNIDSLLETVLLVAEIQELKADPTVRAIGTVIEARLDKGKGAVATLLVQQGTLNVQDPIVVGNTFGRVRAMTNDLGRRVKVAGPSTPVSITGLNETPMAGDHFAVYEDEKAARAAGEERAKRALLKQRQATHRVSLENLFDTLKAGEVKSVNVIIKADVQGSVEALSASLQKIEVEGVKITIVHSAVGAINESDVTLAEASNAFIIGFNVRPTSQARQQAEADDVEIRLHSIIYKVIEEMEDAMKGMLDPEYEEKIIGEALIRETFKVSKVGTIGGFMVINGKVTRDSKVRVIRDGVVIYDGELASLKHFKDDVKEVTNGREGGLMIDGYNDIQVDDTIEAYIMEEIKK.

Residues 27–342 (LGLDVKSHSS…APKPVTERKF (316 aa)) form a disordered region. Positions 52–103 (KAAAPQAPAEKPVAAQPSPQKTPAKEAAPVKAEPTEAKAAAQPEAKTETAAP) are enriched in low complexity. Basic and acidic residues-rich tracts occupy residues 112–128 (FKAE…ERRK) and 136–178 (QNKE…DGRR). Polar residues predominate over residues 183–195 (HQGFNGQKRQQPQ). Positions 218 to 245 (RSSEERFKQAQEAKEVMERQNRRKEQPK) are enriched in basic and acidic residues. Residues 251–268 (PVQPAPAPSAPAANPSPA) are compositionally biased toward pro residues. The segment covering 280–297 (ARPDKKRDDFDREEEGPR) has biased composition (basic and acidic residues). Residues 302 to 318 (NRSSQNQVRNQRNSNWN) show a composition bias toward low complexity. Residues 432–599 (ERPPVVTIMG…TVLLVAEIQE (168 aa)) form the tr-type G domain. The segment at 441–448 (GHVDHGKT) is G1. 441–448 (GHVDHGKT) lines the GTP pocket. The interval 466 to 470 (GITQH) is G2. The tract at residues 487–490 (DTPG) is G3. GTP contacts are provided by residues 487 to 491 (DTPGH) and 541 to 544 (NKID). Positions 541–544 (NKID) are G4. Residues 577-579 (SAK) form a G5 region.

Belongs to the TRAFAC class translation factor GTPase superfamily. Classic translation factor GTPase family. IF-2 subfamily.

Its subcellular location is the cytoplasm. Functionally, one of the essential components for the initiation of protein synthesis. Protects formylmethionyl-tRNA from spontaneous hydrolysis and promotes its binding to the 30S ribosomal subunits. Also involved in the hydrolysis of GTP during the formation of the 70S ribosomal complex. The polypeptide is Translation initiation factor IF-2 (Streptococcus sanguinis (strain SK36)).